Reading from the N-terminus, the 880-residue chain is Alanine--tRNA ligase (880 aa).

The Zn(2+) site is built by H567, H571, C669, and H673.

The protein belongs to the class-II aminoacyl-tRNA synthetase family. Zn(2+) serves as cofactor.

Its subcellular location is the cytoplasm. It catalyses the reaction tRNA(Ala) + L-alanine + ATP = L-alanyl-tRNA(Ala) + AMP + diphosphate. Its function is as follows. Catalyzes the attachment of alanine to tRNA(Ala) in a two-step reaction: alanine is first activated by ATP to form Ala-AMP and then transferred to the acceptor end of tRNA(Ala). Also edits incorrectly charged Ser-tRNA(Ala) and Gly-tRNA(Ala) via its editing domain. The protein is Alanine--tRNA ligase of Bacillus cereus (strain ATCC 14579 / DSM 31 / CCUG 7414 / JCM 2152 / NBRC 15305 / NCIMB 9373 / NCTC 2599 / NRRL B-3711).